The sequence spans 59 residues: Single-pass membrane and coiled-coil domain-containing protein 4 (59 aa).

The segment at 1–25 (MRQLRGKPKKETSKDKKERKQAMQE) is disordered. Residues 9–22 (KKETSKDKKERKQA) show a composition bias toward basic and acidic residues. The stretch at 9-31 (KKETSKDKKERKQAMQEARQQIT) forms a coiled coil. The helical transmembrane segment at 32–52 (TVVLPTLAVVVLLIVVFVYVA) threads the bilayer.

This sequence belongs to the SMCO4 family.

The protein resides in the membrane. This Taeniopygia guttata (Zebra finch) protein is Single-pass membrane and coiled-coil domain-containing protein 4 (smco4).